We begin with the raw amino-acid sequence, 508 residues long: MFS-type transporter penM (508 aa).

The segment at 1–60 (MKDGEETPSVDGSTSASNREKLGTDLEIGPVDLSDGGKEEKVKDPNLVDWDGPDDPENPL) is disordered. Residues 35 to 46 (DGGKEEKVKDPN) show a composition bias toward basic and acidic residues. N-linked (GlcNAc...) asparagine glycosylation occurs at Asn61. A helical transmembrane segment spans residues 73-93 (SIALITFLTPLGSSMFAPGVG). Asn100 carries an N-linked (GlcNAc...) asparagine glycan. 6 consecutive transmembrane segments (helical) span residues 108–128 (SFVVSVYLLGYCFGPLIIAPL), 143–163 (ILYVIWTIACAFAPEIGSLVV), 166–186 (FFAGLAGSCPLTIGAGSIADM), 197–217 (AAWALGPLIGPVVGPVAGAYL), 225–245 (WSFYVLAMAAGAITISSLFSI), and 299–319 (PIVFLLSLYVGVIYGYLYLLF). A Peroxisomal targeting signal motif is present at residues 293 to 307 (KMLFRSPIVFLLSLY). A glycan (N-linked (GlcNAc...) asparagine) is linked at Asn331. Transmembrane regions (helical) follow at residues 335-355 (GAVGLTYLGLGVGSLIGLFLI), 379-399 (LPPMVPGAIFVPISLFMYGWT), 407-427 (IVPIIGTSFLGTGMMITFMCV), 435-457 (FTNYAASVMAANTVFRSLAGALL), and 475-495 (SLLGFIALAFCALPVIFWIYG).

The protein belongs to the major facilitator superfamily.

Its subcellular location is the peroxisome membrane. Functionally, MFS-type transporter involved in penicillin production, most likely through the translocation of isopenicillin N from the cytosol to the peroxisomal lumen across the peroxisomal membrane. The sequence is that of MFS-type transporter penM from Penicillium rubens (strain ATCC 28089 / DSM 1075 / NRRL 1951 / Wisconsin 54-1255) (Penicillium chrysogenum).